A 93-amino-acid chain; its full sequence is Alpha-defensin 6/12 (93 aa).

The signal sequence occupies residues 1–19; sequence MKTLILLSALVLLAFQVQA. Residues 20-60 constitute a propeptide that is removed on maturation; the sequence is DPIQNTDEETKTEEQPGEEDQAVSVSFGDPEGTSLQEESLR. Residues 23 to 54 are disordered; that stretch reads QNTDEETKTEEQPGEEDQAVSVSFGDPEGTSL. Intrachain disulfides connect Cys-64-Cys-92, Cys-66-Cys-81, and Cys-71-Cys-91.

Belongs to the alpha-defensin family. Paneth cells of the small bowel.

Its subcellular location is the secreted. In terms of biological role, has broad-spectrum antimicrobial properties. Has antibacterial activity against the Gram-positive bacterium L.monocytogenes EGD and the Gram-negative bacteria E.coli ML-35p and avirulent S.typhimurium 7953, but not against the mouse-virulent S.typhimurium 14028S. Probably contributes to the antimicrobial barrier function of the small bowel mucosa. The sequence is that of Alpha-defensin 6/12 (Defa6) from Mus musculus (Mouse).